The chain runs to 312 residues: Protoheme IX farnesyltransferase (312 aa).

The next 8 helical transmembrane spans lie at 33–53 (VMLL…VSIN), 54–74 (PLYG…AGAL), 105–125 (FIFG…FVNW), 126–146 (FAAL…TIWL), 154–174 (IVIG…AATG), 181–201 (FLLF…LSLF), 243–263 (IIGF…IIFI), and 291–311 (FYLA…CFII).

This sequence belongs to the UbiA prenyltransferase family. Protoheme IX farnesyltransferase subfamily.

Its subcellular location is the cell inner membrane. The catalysed reaction is heme b + (2E,6E)-farnesyl diphosphate + H2O = Fe(II)-heme o + diphosphate. Its pathway is porphyrin-containing compound metabolism; heme O biosynthesis; heme O from protoheme: step 1/1. In terms of biological role, converts heme B (protoheme IX) to heme O by substitution of the vinyl group on carbon 2 of heme B porphyrin ring with a hydroxyethyl farnesyl side group. This chain is Protoheme IX farnesyltransferase, found in Bartonella henselae (strain ATCC 49882 / DSM 28221 / CCUG 30454 / Houston 1) (Rochalimaea henselae).